The primary structure comprises 308 residues: Membrane protein insertase YidC 1 (308 aa).

Positions Met-1–Gly-22 are cleaved as a signal peptide. Residue Cys-23 is the site of N-palmitoyl cysteine attachment. Cys-23 carries S-diacylglycerol cysteine lipidation. A run of 5 helical transmembrane segments spans residues Phe-60–Ile-80, Phe-135–Phe-155, Tyr-168–Tyr-188, Met-211–Phe-225, and Val-230–Val-252. The segment at Glu-263 to Arg-308 is disordered. The segment covering Ser-269 to Ser-278 has biased composition (polar residues). Basic residues predominate over residues Ser-293–Arg-308.

It belongs to the OXA1/ALB3/YidC family. Type 2 subfamily.

The protein resides in the cell membrane. In terms of biological role, required for the insertion and/or proper folding and/or complex formation of integral membrane proteins into the membrane. Involved in integration of membrane proteins that insert both dependently and independently of the Sec translocase complex, as well as at least some lipoproteins. The chain is Membrane protein insertase YidC 1 from Streptococcus pneumoniae (strain ATCC BAA-255 / R6).